The sequence spans 200 residues: Glycosyl hydrolase family 19 domain-containing protein HI_1415 (200 aa).

The protein belongs to the glycosyl hydrolase 19 family.

In Haemophilus influenzae (strain ATCC 51907 / DSM 11121 / KW20 / Rd), this protein is Glycosyl hydrolase family 19 domain-containing protein HI_1415.